Consider the following 493-residue polypeptide: Lysine--tRNA ligase (493 aa).

2 residues coordinate Mg(2+): Glu406 and Glu413.

The protein belongs to the class-II aminoacyl-tRNA synthetase family. As to quaternary structure, homodimer. It depends on Mg(2+) as a cofactor.

It is found in the cytoplasm. The catalysed reaction is tRNA(Lys) + L-lysine + ATP = L-lysyl-tRNA(Lys) + AMP + diphosphate. This is Lysine--tRNA ligase from Leuconostoc citreum (strain KM20).